The following is a 131-amino-acid chain: Small ribosomal subunit protein bS6 (131 aa).

Positions 98–131 are disordered; it reads EASPMVKAKDERRERRDDFANETADDAEAGDSEE. Positions 104 to 116 are enriched in basic and acidic residues; that stretch reads KAKDERRERRDDF. Residues 120-131 show a composition bias toward acidic residues; sequence TADDAEAGDSEE.

The protein belongs to the bacterial ribosomal protein bS6 family.

In terms of biological role, binds together with bS18 to 16S ribosomal RNA. In Cronobacter sakazakii (strain ATCC BAA-894) (Enterobacter sakazakii), this protein is Small ribosomal subunit protein bS6.